A 215-amino-acid chain; its full sequence is Transcription factor LAX PANICLE 1 (215 aa).

Positions methionine 1–alanine 48 are disordered. Residues leucine 40–arginine 53 form a basic motif; degenerate region. The bHLH domain maps to leucine 40–leucine 89. A helix-loop-helix motif region spans residues histidine 54–leucine 89.

Belongs to the bHLH protein family. As to quaternary structure, efficient DNA binding requires dimerization with another bHLH protein. Interacts with LAX2. In terms of tissue distribution, expressed in the boundary between the shoot apical meristem (SAM) and the region of new meristem formation.

It localises to the nucleus. In terms of biological role, transcription factor that seems to regulate organogenesis in postembryonic development. Involved in the regulation of shoot branching by controlling axillary meristem initiation. Functions in association with LAX2 to regulate the process of AM formation. Possesses transactivation activity in yeast. This chain is Transcription factor LAX PANICLE 1, found in Oryza sativa subsp. japonica (Rice).